The sequence spans 347 residues: Anthranilate phosphoribosyltransferase (347 aa).

5-phospho-alpha-D-ribose 1-diphosphate contacts are provided by residues Gly88, 91 to 92, Thr96, 98 to 101, 116 to 124, and Ser128; these read GD, NIST, and KHGNRAASS. Gly88 contacts anthranilate. A Mg(2+)-binding site is contributed by Ser100. Asn119 serves as a coordination point for anthranilate. Arg174 lines the anthranilate pocket. The Mg(2+) site is built by Asp233 and Glu234.

Belongs to the anthranilate phosphoribosyltransferase family. Homodimer. Requires Mg(2+) as cofactor.

The enzyme catalyses N-(5-phospho-beta-D-ribosyl)anthranilate + diphosphate = 5-phospho-alpha-D-ribose 1-diphosphate + anthranilate. The protein operates within amino-acid biosynthesis; L-tryptophan biosynthesis; L-tryptophan from chorismate: step 2/5. Catalyzes the transfer of the phosphoribosyl group of 5-phosphorylribose-1-pyrophosphate (PRPP) to anthranilate to yield N-(5'-phosphoribosyl)-anthranilate (PRA). This is Anthranilate phosphoribosyltransferase from Rhodospirillum rubrum (strain ATCC 11170 / ATH 1.1.1 / DSM 467 / LMG 4362 / NCIMB 8255 / S1).